Here is a 247-residue protein sequence, read N- to C-terminus: MSRKKNRLTGVDALNEAFDAVDHQPLLDHLGVDIQRDLLVLALTHRSFANENGMLPNNERLEFLGDAVLGLSVANKLYEQYPSSPESDVSKMRASIVSRYGLADIAREIDLGNHILLGKGELLTEGRSKDSILADTTEALFGAIFRQHGFETARDVILRLFAYKIDNASARGIHQDWKTTLQEELAQRKRPMAEYSATSVGPDHDLVFTAIVTLEGEEMGRGEGPNKKLAEQEAAHQAFRKLRESRA.

Residues 21 to 149 (VDHQPLLDHL…LFGAIFRQHG (129 aa)) enclose the RNase III domain. A Mg(2+)-binding site is contributed by Glu-62. Asp-66 is an active-site residue. Mg(2+) contacts are provided by Asp-135 and Glu-138. Glu-138 is an active-site residue. The 69-residue stretch at 176–244 (DWKTTLQEEL…AHQAFRKLRE (69 aa)) folds into the DRBM domain.

Belongs to the ribonuclease III family. As to quaternary structure, homodimer. The cofactor is Mg(2+).

Its subcellular location is the cytoplasm. The catalysed reaction is Endonucleolytic cleavage to 5'-phosphomonoester.. In terms of biological role, digests double-stranded RNA. Involved in the processing of primary rRNA transcript to yield the immediate precursors to the large and small rRNAs (23S and 16S). Processes some mRNAs, and tRNAs when they are encoded in the rRNA operon. Processes pre-crRNA and tracrRNA of type II CRISPR loci if present in the organism. This chain is Ribonuclease 3, found in Corynebacterium glutamicum (strain ATCC 13032 / DSM 20300 / JCM 1318 / BCRC 11384 / CCUG 27702 / LMG 3730 / NBRC 12168 / NCIMB 10025 / NRRL B-2784 / 534).